Consider the following 106-residue polypeptide: Large ribosomal subunit protein eL42 (106 aa).

Positions 36–56 (FAQGKRRYDRKQSGYGGQTKP) are disordered.

This sequence belongs to the eukaryotic ribosomal protein eL42 family.

This is Large ribosomal subunit protein eL42 (RPL44) from Coprinopsis cinerea (strain Okayama-7 / 130 / ATCC MYA-4618 / FGSC 9003) (Inky cap fungus).